A 279-amino-acid chain; its full sequence is Undecaprenyl-diphosphatase (279 aa).

The next 8 helical transmembrane spans lie at 1–21 (MVLE…LPIS), 39–59 (GRFF…LYFF), 96–116 (LLLV…VRFV), 128–148 (FTMG…DALF), 155–175 (IFQI…FAII), 201–221 (FSFL…LVAG), 231–251 (YSLI…SALL), and 259–279 (FVLF…VSFF).

Belongs to the UppP family.

Its subcellular location is the cell membrane. It catalyses the reaction di-trans,octa-cis-undecaprenyl diphosphate + H2O = di-trans,octa-cis-undecaprenyl phosphate + phosphate + H(+). Its function is as follows. Catalyzes the dephosphorylation of undecaprenyl diphosphate (UPP). Confers resistance to bacitracin. The sequence is that of Undecaprenyl-diphosphatase from Tropheryma whipplei (strain TW08/27) (Whipple's bacillus).